We begin with the raw amino-acid sequence, 435 residues long: Nucleoredoxin (435 aa).

Serine 2 is modified (N-acetylserine). Positions 167–321 (PKPFREVIAG…VLELSDSNAV (155 aa)) constitute a Thioredoxin domain.

This sequence belongs to the nucleoredoxin family. In terms of assembly, associates with the phosphatase 2A holoenzyme. Interacts with PPP2CA; the interaction is direct. Interacts with DVL1 (via PDZ domain); the interaction is direct and regulated by oxidative stress.

The protein localises to the cytoplasm. It is found in the cytosol. The protein resides in the nucleus. It carries out the reaction [protein]-dithiol + NAD(+) = [protein]-disulfide + NADH + H(+). It catalyses the reaction [protein]-dithiol + NADP(+) = [protein]-disulfide + NADPH + H(+). In terms of biological role, functions as a redox-dependent negative regulator of the Wnt signaling pathway, possibly by preventing ubiquitination of DVL3 by the BCR(KLHL12) complex. May also function as a transcriptional regulator act as a regulator of protein phosphatase 2A (PP2A). This is Nucleoredoxin (NXN) from Bos taurus (Bovine).